The following is a 230-amino-acid chain: Ribonuclease 3 (230 aa).

Residues 5-125 (YSRLYKILGY…IIGAIYLDSD (121 aa)) enclose the RNase III domain. E40 is a binding site for Mg(2+). The active site involves D44. D111 and E114 together coordinate Mg(2+). E114 is a catalytic residue. In terms of domain architecture, DRBM spans 153–223 (DSKSKLQEIL…AEKMIQILSQ (71 aa)).

It belongs to the ribonuclease III family. In terms of assembly, homodimer. Mg(2+) serves as cofactor.

The protein localises to the cytoplasm. It catalyses the reaction Endonucleolytic cleavage to 5'-phosphomonoester.. In terms of biological role, digests double-stranded RNA. Involved in the processing of primary rRNA transcript to yield the immediate precursors to the large and small rRNAs (23S and 16S). Processes some mRNAs, and tRNAs when they are encoded in the rRNA operon. Processes pre-crRNA and tracrRNA of type II CRISPR loci if present in the organism. This is Ribonuclease 3 from Francisella philomiragia subsp. philomiragia (strain ATCC 25017 / CCUG 19701 / FSC 153 / O#319-036).